The sequence spans 479 residues: V-type ATP synthase beta chain (479 aa).

A disordered region spans residues 458 to 479; sequence EGDSEREAPKMDSPHEEISEKS.

This sequence belongs to the ATPase alpha/beta chains family.

In terms of biological role, produces ATP from ADP in the presence of a proton gradient across the membrane. The V-type beta chain is a regulatory subunit. The sequence is that of V-type ATP synthase beta chain from Nitrosococcus oceani (strain ATCC 19707 / BCRC 17464 / JCM 30415 / NCIMB 11848 / C-107).